Here is a 182-residue protein sequence, read N- to C-terminus: Ribosome-recycling factor (182 aa).

Belongs to the RRF family.

It localises to the cytoplasm. Responsible for the release of ribosomes from messenger RNA at the termination of protein biosynthesis. May increase the efficiency of translation by recycling ribosomes from one round of translation to another. The protein is Ribosome-recycling factor of Picosynechococcus sp. (strain ATCC 27264 / PCC 7002 / PR-6) (Agmenellum quadruplicatum).